We begin with the raw amino-acid sequence, 76 residues long: Putative defensin-like protein 62 (76 aa).

Residues 1–26 (MDVTKTYVTIFVVAILTISVLIQIQQ) form the signal peptide. Intrachain disulfides connect C30–C71, C34–C57, C43–C69, and C47–C70.

It belongs to the DEFL family.

The protein localises to the secreted. This chain is Putative defensin-like protein 62, found in Arabidopsis thaliana (Mouse-ear cress).